The primary structure comprises 1219 residues: Cullin-associated NEDD8-dissociated protein 1 (1219 aa).

The residue at position 2 (alanine 2) is an N-acetylalanine. HEAT repeat units follow at residues 44-81 (DLEV…KVGE), 83-119 (RIVE…QIAP), 209-244 (KATV…AVGY), 248-288 (THLG…RCPR), 327-363 (EEDD…SRSE), 367-404 (KVYQ…QTGN), 423-460 (QEVS…VLPD), 464-503 (DHIG…SHAP), 599-636 (AELP…LHIN), 639-676 (CVLD…AYGD), 808-848 (KNCS…RKDL), 850-883 (AHAG…IAVG), 927-964 (SSVE…IEPE), 966-998 (LVPA…ERPE), 1002-1039 (EIIF…YKPN), 1043-1079 (GLLP…DDGL), 1101-1137 (NPSS…KCPS), and 1141-1180 (AVLD…ALRA). Positions 311–340 (FTDNMEEDTDNETLEDEEDDESANEYTDDE) are disordered. The span at 314–340 (NMEEDTDNETLEDEEDDESANEYTDDE) shows a compositional bias: acidic residues.

It belongs to the CAND family. As to quaternary structure, interacts with CUL1 and CUL4. Binds unneddylated CUL1, but cannot bind CUL1 once it has been neddylated. As to expression, highly expressed in roots. Expressed in stems, flowers and siliques.

Functionally, key assembly factor of SCF (SKP1-CUL1-F-box protein) E3 ubiquitin ligase complexes that promotes the exchange of the substrate-recognition F-box subunit in SCF complexes, thereby playing a key role in the cellular repertoire of SCF complexes. Acts as a F-box protein exchange factor. Required for SCF(TIR1) function. Modulates SCF(TIR1) function through its interactions with the CUL1 subunit. Represses photomorphogenesis by promoting HY5 degradation in darkness. In Arabidopsis thaliana (Mouse-ear cress), this protein is Cullin-associated NEDD8-dissociated protein 1 (CAND1).